A 490-amino-acid polypeptide reads, in one-letter code: Prostaglandin E2 receptor EP4 subtype (490 aa).

Residues methionine 1–serine 19 lie on the Extracellular side of the membrane. Residue asparagine 7 is glycosylated (N-linked (GlcNAc...) asparagine). A helical transmembrane segment spans residues proline 20–cysteine 43. The Cytoplasmic portion of the chain corresponds to lysine 44 to tyrosine 55. A helical transmembrane segment spans residues threonine 56–threonine 79. Residues tyrosine 80–threonine 96 lie on the Extracellular side of the membrane. The cysteines at positions 92 and 170 are disulfide-linked. Residues phenylalanine 97–valine 115 form a helical membrane-spanning segment. Topologically, residues glutamate 116–leucine 135 are cytoplasmic. The helical transmembrane segment at alanine 136–serine 160 threads the bilayer. At serine 161–tyrosine 184 the chain is on the extracellular side. Residues serine 185–leucine 211 traverse the membrane as a helical segment. Topologically, residues arginine 212–glutamate 269 are cytoplasmic. The helical transmembrane segment at isoleucine 270–asparagine 297 threads the bilayer. Residues glutamine 298–leucine 314 lie on the Extracellular side of the membrane. A helical transmembrane segment spans residues glutamine 315–leucine 334. At arginine 335 to isoleucine 490 the chain is on the cytoplasmic side. A disordered region spans residues glutamate 359 to histidine 378. A compositionally biased stretch (polar residues) spans glutamine 363–histidine 378. Phosphoserine occurs at positions 376, 379, 381, and 384. Polar residues predominate over residues serine 439–glutamate 451. Positions serine 439–threonine 477 are disordered.

Belongs to the G-protein coupled receptor 1 family. As to quaternary structure, interacts with FEM1A. Post-translationally, phosphorylation mediates agonist-mediated desensitization by promoting cytoplasmic retention.

It is found in the cell membrane. Its function is as follows. Receptor for prostaglandin E2 (PGE2). The activity of this receptor is mediated by G(s) proteins that stimulate adenylate cyclase. Has a relaxing effect on smooth muscle. May play an important role in regulating renal hemodynamics, intestinal epithelial transport, adrenal aldosterone secretion, and uterine function. The sequence is that of Prostaglandin E2 receptor EP4 subtype (PTGER4) from Pan troglodytes (Chimpanzee).